The sequence spans 163 residues: Putative MucR family transcriptional regulatory protein RA0938 (163 aa).

This sequence belongs to the ros/MucR family.

This Rhizobium meliloti (strain 1021) (Ensifer meliloti) protein is Putative MucR family transcriptional regulatory protein RA0938.